The sequence spans 612 residues: Threonine--tRNA ligase (612 aa).

The interval 218–509 is catalytic; sequence DHRKLGVELG…LSEHFGGNFP (292 aa). Residues C310, H361, and H486 each contribute to the Zn(2+) site.

It belongs to the class-II aminoacyl-tRNA synthetase family. In terms of assembly, homodimer. It depends on Zn(2+) as a cofactor.

The protein localises to the cytoplasm. It catalyses the reaction tRNA(Thr) + L-threonine + ATP = L-threonyl-tRNA(Thr) + AMP + diphosphate + H(+). Its function is as follows. Catalyzes the attachment of threonine to tRNA(Thr) in a two-step reaction: L-threonine is first activated by ATP to form Thr-AMP and then transferred to the acceptor end of tRNA(Thr). Also edits incorrectly charged L-seryl-tRNA(Thr). The sequence is that of Threonine--tRNA ligase from Helicobacter pylori (strain ATCC 700392 / 26695) (Campylobacter pylori).